Consider the following 484-residue polypeptide: Proline--tRNA ligase (484 aa).

This sequence belongs to the class-II aminoacyl-tRNA synthetase family. ProS type 3 subfamily. Homodimer.

It is found in the cytoplasm. The enzyme catalyses tRNA(Pro) + L-proline + ATP = L-prolyl-tRNA(Pro) + AMP + diphosphate. In terms of biological role, catalyzes the attachment of proline to tRNA(Pro) in a two-step reaction: proline is first activated by ATP to form Pro-AMP and then transferred to the acceptor end of tRNA(Pro). In Haloarcula marismortui (strain ATCC 43049 / DSM 3752 / JCM 8966 / VKM B-1809) (Halobacterium marismortui), this protein is Proline--tRNA ligase.